Reading from the N-terminus, the 141-residue chain is Phosphoribosyl-AMP cyclohydrolase (141 aa).

Asp-91 lines the Mg(2+) pocket. Cys-92 lines the Zn(2+) pocket. Asp-93 and Asp-95 together coordinate Mg(2+). Zn(2+) contacts are provided by Cys-110 and Cys-117.

This sequence belongs to the PRA-CH family. As to quaternary structure, homodimer. The cofactor is Mg(2+). Requires Zn(2+) as cofactor.

The protein resides in the cytoplasm. The catalysed reaction is 1-(5-phospho-beta-D-ribosyl)-5'-AMP + H2O = 1-(5-phospho-beta-D-ribosyl)-5-[(5-phospho-beta-D-ribosylamino)methylideneamino]imidazole-4-carboxamide. The protein operates within amino-acid biosynthesis; L-histidine biosynthesis; L-histidine from 5-phospho-alpha-D-ribose 1-diphosphate: step 3/9. Catalyzes the hydrolysis of the adenine ring of phosphoribosyl-AMP. This Brucella anthropi (strain ATCC 49188 / DSM 6882 / CCUG 24695 / JCM 21032 / LMG 3331 / NBRC 15819 / NCTC 12168 / Alc 37) (Ochrobactrum anthropi) protein is Phosphoribosyl-AMP cyclohydrolase.